Consider the following 443-residue polypeptide: Chorionicgonadotropic hormone-like protein (443 aa).

Basic residues predominate over residues 263-286 (RCAGRPCPRRHRRPCNASKSHRPM). A disordered region spans residues 263-292 (RCAGRPCPRRHRRPCNASKSHRPMRMQQRD).

To mammalian CGHB.

The protein resides in the secreted. Its subcellular location is the cell wall. Functionally, cell wall protein that resembles the beta subunit of human chorionic gonadotropin. Stimulates growth and change in morphology. This Stenotrophomonas maltophilia (Pseudomonas maltophilia) protein is Chorionicgonadotropic hormone-like protein (xcg).